The chain runs to 316 residues: Probable 5-dehydro-4-deoxyglucarate dehydratase (316 aa).

It belongs to the DapA family.

It catalyses the reaction 5-dehydro-4-deoxy-D-glucarate + H(+) = 2,5-dioxopentanoate + CO2 + H2O. It participates in carbohydrate acid metabolism; D-glucarate degradation; 2,5-dioxopentanoate from D-glucarate: step 2/2. The sequence is that of Probable 5-dehydro-4-deoxyglucarate dehydratase from Corynebacterium glutamicum (strain R).